Reading from the N-terminus, the 252-residue chain is Chitooligosaccharide deacetylase (252 aa).

2 residues coordinate Mg(2+): His-61 and His-125.

Belongs to the YdjC deacetylase family. ChbG subfamily. In terms of assembly, homodimer. It depends on Mg(2+) as a cofactor.

The protein localises to the cytoplasm. The catalysed reaction is N,N'-diacetylchitobiose + H2O = N-acetyl-beta-D-glucosaminyl-(1-&gt;4)-D-glucosamine + acetate. The enzyme catalyses diacetylchitobiose-6'-phosphate + H2O = N'-monoacetylchitobiose-6'-phosphate + acetate. Its pathway is glycan degradation; chitin degradation. In terms of biological role, involved in the degradation of chitin. ChbG is essential for growth on the acetylated chitooligosaccharides chitobiose and chitotriose but is dispensable for growth on cellobiose and chitosan dimer, the deacetylated form of chitobiose. Deacetylation of chitobiose-6-P and chitotriose-6-P is necessary for both the activation of the chb promoter by the regulatory protein ChbR and the hydrolysis of phosphorylated beta-glucosides by the phospho-beta-glucosidase ChbF. Catalyzes the removal of only one acetyl group from chitobiose-6-P to yield monoacetylchitobiose-6-P, the inducer of ChbR and the substrate of ChbF. This Escherichia coli O8 (strain IAI1) protein is Chitooligosaccharide deacetylase.